The chain runs to 31 residues: MSDIN-like toxin proprotein 4 (31 aa).

Positions 1 to 10 are excised as a propeptide; it reads MSDINGTRLP. Positions 11 to 16 form a cross-link, cyclopeptide (Trp-Pro); that stretch reads WLATCP. Residues 17–31 constitute a propeptide that is removed on maturation; that stretch reads CVGEDVNPTLSRGER.

This sequence belongs to the MSDIN fungal toxin family. Processed by the macrocyclase-peptidase enzyme POPB to yield a toxic cyclic hexapeptide. POPB first removes 10 residues from the N-terminus. Conformational trapping of the remaining peptide forces the enzyme to release this intermediate rather than proceed to macrocyclization. The enzyme rebinds the remaining peptide in a different conformation and catalyzes macrocyclization of the N-terminal 6 residues.

In terms of biological role, probable toxin that belongs to the MSDIN-like toxin family responsible for a large number of food poisoning cases and deaths. In Amanita phalloides (Death cap), this protein is MSDIN-like toxin proprotein 4.